The sequence spans 226 residues: ATP-dependent Clp protease proteolytic subunit 4 (226 aa).

Ser122 (nucleophile) is an active-site residue. His147 is a catalytic residue.

The protein belongs to the peptidase S14 family. As to quaternary structure, fourteen ClpP subunits assemble into 2 heptameric rings which stack back to back to give a disk-like structure with a central cavity, resembling the structure of eukaryotic proteasomes.

Its subcellular location is the cytoplasm. The enzyme catalyses Hydrolysis of proteins to small peptides in the presence of ATP and magnesium. alpha-casein is the usual test substrate. In the absence of ATP, only oligopeptides shorter than five residues are hydrolyzed (such as succinyl-Leu-Tyr-|-NHMec, and Leu-Tyr-Leu-|-Tyr-Trp, in which cleavage of the -Tyr-|-Leu- and -Tyr-|-Trp bonds also occurs).. In terms of biological role, cleaves peptides in various proteins in a process that requires ATP hydrolysis. Has a chymotrypsin-like activity. Plays a major role in the degradation of misfolded proteins. This is ATP-dependent Clp protease proteolytic subunit 4 from Streptomyces avermitilis (strain ATCC 31267 / DSM 46492 / JCM 5070 / NBRC 14893 / NCIMB 12804 / NRRL 8165 / MA-4680).